A 2103-amino-acid polypeptide reads, in one-letter code: Orsellinic acid synthase (2103 aa).

The interval 17–232 is N-terminal acylcarrier protein transacylase domain (SAT); the sequence is DAVHDLNVRS…KRPELAHATI (216 aa). The 435-residue stretch at 348–782 folds into the Ketosynthase family 3 (KS3) domain; that stretch reads ADAIAVVGMS…GGNVSMLLQD (435 aa). Active-site for beta-ketoacyl synthase activity residues include Cys-525, His-660, and His-702. The interval 881–1197 is malonyl-CoA:ACP transacylase (MAT) domain; sequence VFTFTGQGAQ…RRGGDDWQSV (317 aa). Ser-973 serves as the catalytic For acyl/malonyl transferase activity. The segment at 1272–1409 is N-terminal hotdog fold; it reads HAVEKLQREE…GQPDSAVRRD (138 aa). Residues 1272–1582 enclose the PKS/mFAS DH domain; it reads HAVEKLQREE…FKKLERDFFA (311 aa). A product template (PT) domain region spans residues 1303–1579; sequence GHVVDESAIC…DICFKKLERD (277 aa). His-1304 acts as the Proton acceptor; for dehydratase activity in catalysis. The interval 1433-1582 is C-terminal hotdog fold; sequence VHAMDTALFY…FKKLERDFFA (150 aa). Residue Asp-1493 is the Proton donor; for dehydratase activity of the active site. The disordered stretch occupies residues 1592–1638; that stretch reads STKPVAAAPAKSMAKRARQLAPSPSPSSSSGSNTPMSRSPTPSSVSD. 2 stretches are compositionally biased toward low complexity: residues 1594 to 1603 and 1617 to 1631; these read KPVAAAPAKS and PSSS…SRSP. 2 Carrier domains span residues 1640–1716 and 1741–1815; these read VDLG…GGSA and PAPS…DDDA. Ser-1676 carries the post-translational modification O-(pantetheine 4'-phosphoryl)serine. The interval 1722–1743 is disordered; the sequence is EDITKPTPSPEQTQARKQGPAP. An O-(pantetheine 4'-phosphoryl)serine modification is found at Ser-1775. The interval 1809–1838 is disordered; it reads EALDDDAEEESAPAQTSTNPAKETTIDSSR. Over residues 1810-1819 the composition is skewed to acidic residues; sequence ALDDDAEEES. Positions 1823–1836 are enriched in polar residues; the sequence is QTSTNPAKETTIDS. The tract at residues 1849–2082 is thioesterase (TE) domain; that stretch reads ASYIHLKALP…TVNGDHFSMM (234 aa).

The catalysed reaction is 3 malonyl-CoA + acetyl-CoA + 2 H(+) = orsellinate + 3 CO2 + 4 CoA. It functions in the pathway secondary metabolite biosynthesis. In terms of biological role, non-reducing polyketide synthase; part of the gene cluster that mediates the biosynthesis of orsellinic acid, as well as of the cathepsin K inhibitors F9775 A and F9775 B. The non-reducing polyketide synthase orsA produces orsellinic acid by condensing acetyl-CoA with 3 malonyl-CoA units. Further modifications by the decarboxylase orsB and the tyrosinase-like protein orsC lead to the production of F9775 A and F9775 B. The functions of orsD and orsE remain unclear since only orsB and orsC are required to convert orsellinic acid into F9775 A and F9775 B. This is Orsellinic acid synthase from Emericella nidulans (strain FGSC A4 / ATCC 38163 / CBS 112.46 / NRRL 194 / M139) (Aspergillus nidulans).